The primary structure comprises 131 residues: Glycine cleavage system H protein (131 aa).

Residues 24 to 106 form the Lipoyl-binding domain; that stretch reads TVRIGITDYA…YGEGWLVDLE (83 aa). The residue at position 65 (lysine 65) is an N6-lipoyllysine.

It belongs to the GcvH family. In terms of assembly, the glycine cleavage system is composed of four proteins: P, T, L and H. (R)-lipoate serves as cofactor.

The glycine cleavage system catalyzes the degradation of glycine. The H protein shuttles the methylamine group of glycine from the P protein to the T protein. This chain is Glycine cleavage system H protein, found in Mycobacteroides abscessus (strain ATCC 19977 / DSM 44196 / CCUG 20993 / CIP 104536 / JCM 13569 / NCTC 13031 / TMC 1543 / L948) (Mycobacterium abscessus).